The chain runs to 363 residues: UDP-N-acetylglucosamine--N-acetylmuramyl-(pentapeptide) pyrophosphoryl-undecaprenol N-acetylglucosamine transferase (363 aa).

Residues 14–16 (TGG), asparagine 122, arginine 163, serine 190, and glutamine 285 each bind UDP-N-acetyl-alpha-D-glucosamine.

It belongs to the glycosyltransferase 28 family. MurG subfamily.

Its subcellular location is the cell inner membrane. It carries out the reaction di-trans,octa-cis-undecaprenyl diphospho-N-acetyl-alpha-D-muramoyl-L-alanyl-D-glutamyl-meso-2,6-diaminopimeloyl-D-alanyl-D-alanine + UDP-N-acetyl-alpha-D-glucosamine = di-trans,octa-cis-undecaprenyl diphospho-[N-acetyl-alpha-D-glucosaminyl-(1-&gt;4)]-N-acetyl-alpha-D-muramoyl-L-alanyl-D-glutamyl-meso-2,6-diaminopimeloyl-D-alanyl-D-alanine + UDP + H(+). It participates in cell wall biogenesis; peptidoglycan biosynthesis. Functionally, cell wall formation. Catalyzes the transfer of a GlcNAc subunit on undecaprenyl-pyrophosphoryl-MurNAc-pentapeptide (lipid intermediate I) to form undecaprenyl-pyrophosphoryl-MurNAc-(pentapeptide)GlcNAc (lipid intermediate II). The polypeptide is UDP-N-acetylglucosamine--N-acetylmuramyl-(pentapeptide) pyrophosphoryl-undecaprenol N-acetylglucosamine transferase (Prochlorococcus marinus (strain MIT 9312)).